A 693-amino-acid polypeptide reads, in one-letter code: Elongation factor G (693 aa).

Residues 9–283 (ERVRNIGIIA…AVCDYLPSPV (275 aa)) enclose the tr-type G domain. Residues 18–25 (AHIDAGKT), 82–86 (DTPGH), and 136–139 (NKMD) each bind GTP.

Belongs to the TRAFAC class translation factor GTPase superfamily. Classic translation factor GTPase family. EF-G/EF-2 subfamily.

The protein localises to the cytoplasm. In terms of biological role, catalyzes the GTP-dependent ribosomal translocation step during translation elongation. During this step, the ribosome changes from the pre-translocational (PRE) to the post-translocational (POST) state as the newly formed A-site-bound peptidyl-tRNA and P-site-bound deacylated tRNA move to the P and E sites, respectively. Catalyzes the coordinated movement of the two tRNA molecules, the mRNA and conformational changes in the ribosome. The chain is Elongation factor G from Dehalococcoides mccartyi (strain ATCC BAA-2266 / KCTC 15142 / 195) (Dehalococcoides ethenogenes (strain 195)).